The chain runs to 1370 residues: DNA-directed RNA polymerase subunit beta (1370 aa).

It belongs to the RNA polymerase beta chain family. As to quaternary structure, the RNAP catalytic core consists of 2 alpha, 1 beta, 1 beta' and 1 omega subunit. When a sigma factor is associated with the core the holoenzyme is formed, which can initiate transcription.

It catalyses the reaction RNA(n) + a ribonucleoside 5'-triphosphate = RNA(n+1) + diphosphate. Functionally, DNA-dependent RNA polymerase catalyzes the transcription of DNA into RNA using the four ribonucleoside triphosphates as substrates. The polypeptide is DNA-directed RNA polymerase subunit beta (Bordetella parapertussis (strain 12822 / ATCC BAA-587 / NCTC 13253)).